Reading from the N-terminus, the 100-residue chain is Apolipoprotein C-II (100 aa).

The first 22 residues, 1 to 22, serve as a signal peptide directing secretion; sequence MGSRFLLALFLVLLVLGCEVQA. The interval 66-74 is lipid binding; it reads SVDEKLRDM. The segment at 78–100 is lipoprotein lipase cofactor; sequence SSAAMTTYASIFTDQILTLLKGE.

It belongs to the apolipoprotein C2 family. In terms of processing, proapolipoprotein C-II is synthesized as a sialic acid containing glycoprotein which is subsequently desialylated prior to its proteolytic processing. Proapolipoprotein C-II, the major form found in plasma undergoes proteolytic cleavage of its N-terminal hexapeptide to generate the mature form apolipoprotein C-II, which occurs as the minor form in plasma.

Its subcellular location is the secreted. Functionally, component of chylomicrons, very low-density lipoproteins (VLDL), low-density lipoproteins (LDL), and high-density lipoproteins (HDL) in plasma. Plays an important role in lipoprotein metabolism as an activator of lipoprotein lipase. This is Apolipoprotein C-II (APOC2) from Ellobius talpinus (Northern mole vole).